We begin with the raw amino-acid sequence, 149 residues long: D-aminoacyl-tRNA deacylase (149 aa).

The Gly-cisPro motif, important for rejection of L-amino acids signature appears at 137–138; sequence GP.

It belongs to the DTD family. Homodimer.

The protein resides in the cytoplasm. The catalysed reaction is glycyl-tRNA(Ala) + H2O = tRNA(Ala) + glycine + H(+). It catalyses the reaction a D-aminoacyl-tRNA + H2O = a tRNA + a D-alpha-amino acid + H(+). In terms of biological role, an aminoacyl-tRNA editing enzyme that deacylates mischarged D-aminoacyl-tRNAs. Also deacylates mischarged glycyl-tRNA(Ala), protecting cells against glycine mischarging by AlaRS. Acts via tRNA-based rather than protein-based catalysis; rejects L-amino acids rather than detecting D-amino acids in the active site. By recycling D-aminoacyl-tRNA to D-amino acids and free tRNA molecules, this enzyme counteracts the toxicity associated with the formation of D-aminoacyl-tRNA entities in vivo and helps enforce protein L-homochirality. The protein is D-aminoacyl-tRNA deacylase of Clostridium botulinum (strain ATCC 19397 / Type A).